A 554-amino-acid chain; its full sequence is Protein SINE2 (554 aa).

An ARMADILLO-type fold region spans residues 17-290 (DKDPDSHKTA…MAAHETMRQA (274 aa)). Disordered stretches follow at residues 306-332 (CKPR…VYSR), 411-442 (NESV…KHHR), and 465-487 (ETSS…TTED). Residues 311 to 321 (SLSGSVKSTSS) are compositionally biased toward low complexity. The segment covering 322 to 332 (LREHDGSVYSR) has biased composition (basic and acidic residues). Residues 419–431 (NRSRSSRRNTKKR) are compositionally biased toward basic residues. The span at 465–485 (ETSSSSSIYDTSGTTTPTNTT) shows a compositional bias: low complexity. The 46-residue stretch at 509-554 (LDPRLGRSKGVLKLGLSVFSIAVAGFASFMWMYLQDDMMPPHLVPT) folds into the KASH domain. The helical transmembrane segment at 522-542 (LGLSVFSIAVAGFASFMWMYL) threads the bilayer. The Required for nuclear localization signature appears at 551 to 554 (LVPT).

In terms of assembly, interacts with SUN1 and SUN2. Expressed in epidermal cells, mesophyll cells, trichomes and root cells.

The protein resides in the nucleus membrane. Its function is as follows. Plays a role in innate immunity against the oomycete pathogen A.arabidopsidis (Hpa). This is Protein SINE2 from Arabidopsis thaliana (Mouse-ear cress).